Here is a 298-residue protein sequence, read N- to C-terminus: N-acetylmuramic acid 6-phosphate etherase (298 aa).

The SIS domain maps to 55 to 218 (AANRYKKGGR…STGVMIRQGK (164 aa)). Glutamate 83 (proton donor) is an active-site residue. Glutamate 114 is a catalytic residue.

The protein belongs to the GCKR-like family. MurNAc-6-P etherase subfamily. In terms of assembly, homodimer.

The enzyme catalyses N-acetyl-D-muramate 6-phosphate + H2O = N-acetyl-D-glucosamine 6-phosphate + (R)-lactate. Its pathway is amino-sugar metabolism; N-acetylmuramate degradation. In terms of biological role, specifically catalyzes the cleavage of the D-lactyl ether substituent of MurNAc 6-phosphate, producing GlcNAc 6-phosphate and D-lactate. This Lactobacillus acidophilus (strain ATCC 700396 / NCK56 / N2 / NCFM) protein is N-acetylmuramic acid 6-phosphate etherase.